The chain runs to 281 residues: Diaminopimelate epimerase (281 aa).

Substrate is bound by residues asparagine 14 and asparagine 65. Residue cysteine 74 is the Proton donor of the active site. Substrate-binding positions include glycine 75–asparagine 76, asparagine 165, asparagine 198, and glutamate 216–arginine 217. Cysteine 225 functions as the Proton acceptor in the catalytic mechanism. Position 226–227 (glycine 226–threonine 227) interacts with substrate.

The protein belongs to the diaminopimelate epimerase family. In terms of assembly, homodimer.

The protein localises to the cytoplasm. It carries out the reaction (2S,6S)-2,6-diaminopimelate = meso-2,6-diaminopimelate. Its pathway is amino-acid biosynthesis; L-lysine biosynthesis via DAP pathway; DL-2,6-diaminopimelate from LL-2,6-diaminopimelate: step 1/1. Catalyzes the stereoinversion of LL-2,6-diaminopimelate (L,L-DAP) to meso-diaminopimelate (meso-DAP), a precursor of L-lysine and an essential component of the bacterial peptidoglycan. The sequence is that of Diaminopimelate epimerase from Leptospira borgpetersenii serovar Hardjo-bovis (strain JB197).